A 576-amino-acid chain; its full sequence is Proton pump-interactor 3B (576 aa).

The disordered stretch occupies residues 34–63 (SEVTTDEEEDTIFSGGDSSSGLAAEEDSSG). Coiled coils occupy residues 132 to 155 (RMVIEEKKKEFDTLLEALRNLRCT) and 205 to 241 (EKEASINRVKSMALELNEVKNELDAITWKINDLSDKL). Basic and acidic residues predominate over residues 369–381 (RSEKVHKMNREDS). Residues 369-395 (RSEKVHKMNREDSSSNSSEDGNVITDK) are disordered. Residues 411 to 467 (KKKEEEIDEEALKERKREEQLEKARLVMERKRKLQEKAAAKAAIRAQKEAEKKLKAI) adopt a coiled-coil conformation. The chain crosses the membrane as a helical span at residues 555 to 575 (WVWGLSSAALAVSLVLVVLLL).

It belongs to the plant Proton pump-interactor protein family.

It localises to the cell membrane. The protein resides in the endoplasmic reticulum membrane. In terms of biological role, may regulate plasma membrane ATPase activity. The sequence is that of Proton pump-interactor 3B (PPI3B) from Arabidopsis thaliana (Mouse-ear cress).